The sequence spans 311 residues: Pantothenate synthetase (311 aa).

Residue 43-50 participates in ATP binding; sequence MGALHEGH. The active-site Proton donor is the H50. Q75 is a binding site for (R)-pantoate. Q75 provides a ligand contact to beta-alanine. 161 to 164 serves as a coordination point for ATP; sequence GEKD. (R)-pantoate is bound at residue Q167. Residues V190 and 198 to 201 contribute to the ATP site; that span reads MSSR.

Belongs to the pantothenate synthetase family. Homodimer.

It localises to the cytoplasm. It catalyses the reaction (R)-pantoate + beta-alanine + ATP = (R)-pantothenate + AMP + diphosphate + H(+). It participates in cofactor biosynthesis; (R)-pantothenate biosynthesis; (R)-pantothenate from (R)-pantoate and beta-alanine: step 1/1. Its function is as follows. Catalyzes the condensation of pantoate with beta-alanine in an ATP-dependent reaction via a pantoyl-adenylate intermediate. The polypeptide is Pantothenate synthetase (Mycolicibacterium vanbaalenii (strain DSM 7251 / JCM 13017 / BCRC 16820 / KCTC 9966 / NRRL B-24157 / PYR-1) (Mycobacterium vanbaalenii)).